A 1330-amino-acid chain; its full sequence is Sister chromatid cohesion protein PDS5 homolog A (1330 aa).

The HEAT repeat unit spans residues 387–423 (SLVNDQLLGFVRERTLDKRWRVRKEAMMGLAQLYKKY). The disordered stretch occupies residues 1138–1330 (VNKPLSATGR…AAQRQIDLQR (193 aa)). Positions 1160 to 1171 (SNISVNSELSSS) are enriched in low complexity. Polar residues predominate over residues 1216–1225 (SDQATQGNST).

It belongs to the PDS5 family. As to quaternary structure, interacts with the cohesin complex. Binds chromatin in a cohesin-dependent manner.

It localises to the nucleus. Its function is as follows. May regulate sister chromatid cohesion during mitosis and couple it to DNA replication. The polypeptide is Sister chromatid cohesion protein PDS5 homolog A (Gallus gallus (Chicken)).